Reading from the N-terminus, the 316-residue chain is Probable cell division protein WhiA (316 aa).

The H-T-H motif DNA-binding region spans 275 to 309; it reads TLKELGEMVSGGKISKSGINHRLRKIDEIAEKLRA.

It belongs to the WhiA family.

Functionally, involved in cell division and chromosome segregation. This Bacillus cytotoxicus (strain DSM 22905 / CIP 110041 / 391-98 / NVH 391-98) protein is Probable cell division protein WhiA.